A 96-amino-acid chain; its full sequence is Co-chaperonin GroES (96 aa).

This sequence belongs to the GroES chaperonin family. Heptamer of 7 subunits arranged in a ring. Interacts with the chaperonin GroEL.

Its subcellular location is the cytoplasm. In terms of biological role, together with the chaperonin GroEL, plays an essential role in assisting protein folding. The GroEL-GroES system forms a nano-cage that allows encapsulation of the non-native substrate proteins and provides a physical environment optimized to promote and accelerate protein folding. GroES binds to the apical surface of the GroEL ring, thereby capping the opening of the GroEL channel. This is Co-chaperonin GroES from Shewanella loihica (strain ATCC BAA-1088 / PV-4).